A 279-amino-acid polypeptide reads, in one-letter code: MANLIDGKLISTQIKDELKEEVTELKKKGIEGCLAVIQVGNDPASSVYVRNKKKACEYVGIKSLSYELAEETTEDEILKLIEKLNADSSVNGILCQLPLPKHIDEDKVIDAIDPKKDVDGFSPQSVGAMVIGKPGFLPCTPAGIIQLLKRSNIDIDGKSCVVVGRSNIVGKPMSLLMLRENATVTVCHSHTKDLKDVCKNADILIVAIGKPKFIDASYVKDGAVVIDVGIHRNAENKLCGDVDFDSVVSKASHITPVPGGVGPMTIAMLMSNCVEAMKR.

Residues 164-166, Ser189, and Ile230 each bind NADP(+); that span reads GRS.

This sequence belongs to the tetrahydrofolate dehydrogenase/cyclohydrolase family. In terms of assembly, homodimer.

The catalysed reaction is (6R)-5,10-methylene-5,6,7,8-tetrahydrofolate + NADP(+) = (6R)-5,10-methenyltetrahydrofolate + NADPH. The enzyme catalyses (6R)-5,10-methenyltetrahydrofolate + H2O = (6R)-10-formyltetrahydrofolate + H(+). It functions in the pathway one-carbon metabolism; tetrahydrofolate interconversion. Its function is as follows. Catalyzes the oxidation of 5,10-methylenetetrahydrofolate to 5,10-methenyltetrahydrofolate and then the hydrolysis of 5,10-methenyltetrahydrofolate to 10-formyltetrahydrofolate. The polypeptide is Bifunctional protein FolD (Agathobacter rectalis (strain ATCC 33656 / DSM 3377 / JCM 17463 / KCTC 5835 / VPI 0990) (Eubacterium rectale)).